The primary structure comprises 397 residues: Enoyl-[acyl-carrier-protein] reductase [NADH] (397 aa).

NAD(+) is bound by residues 48 to 53, 74 to 75, 111 to 112, and 139 to 140; these read GASTGY, FE, DA, and LA. Tyrosine 225 is a substrate binding site. The active-site Proton donor is the tyrosine 235. NAD(+)-binding positions include lysine 244 and 273-275; that span reads VVT.

It belongs to the TER reductase family. Monomer.

The enzyme catalyses a 2,3-saturated acyl-[ACP] + NAD(+) = a (2E)-enoyl-[ACP] + NADH + H(+). Its pathway is lipid metabolism; fatty acid biosynthesis. In terms of biological role, involved in the final reduction of the elongation cycle of fatty acid synthesis (FAS II). Catalyzes the reduction of a carbon-carbon double bond in an enoyl moiety that is covalently linked to an acyl carrier protein (ACP). The protein is Enoyl-[acyl-carrier-protein] reductase [NADH] of Edwardsiella ictaluri (strain 93-146).